Reading from the N-terminus, the 689-residue chain is Glycine--tRNA ligase beta subunit (689 aa).

It belongs to the class-II aminoacyl-tRNA synthetase family. Tetramer of two alpha and two beta subunits.

The protein localises to the cytoplasm. The catalysed reaction is tRNA(Gly) + glycine + ATP = glycyl-tRNA(Gly) + AMP + diphosphate. The protein is Glycine--tRNA ligase beta subunit (glyS) of Pasteurella multocida (strain Pm70).